The sequence spans 205 residues: Peroxynitrite isomerase (205 aa).

The disordered stretch occupies residues 1-23; that stretch reads MTEPDPAAAEQRPSVGRNLPTFQ. The GXWXGXG signature appears at 52–58; it reads GVWRGEG. Heme b-binding residues include threonine 63, lysine 168, and histidine 195.

It belongs to the nitrobindin family. In terms of assembly, homodimer. Heme b serves as cofactor.

It catalyses the reaction peroxynitrite = nitrate. Its pathway is nitrogen metabolism. Its function is as follows. Heme-binding protein able to scavenge peroxynitrite and to protect free L-tyrosine against peroxynitrite-mediated nitration, by acting as a peroxynitrite isomerase that converts peroxynitrite to nitrate. Therefore, this protein likely plays a role in peroxynitrite sensing and in the detoxification of reactive nitrogen and oxygen species (RNS and ROS, respectively). Is able to bind nitric oxide (NO) in vitro, but may act as a sensor of peroxynitrite levels in vivo. This is Peroxynitrite isomerase from Mycobacteroides abscessus (strain ATCC 19977 / DSM 44196 / CCUG 20993 / CIP 104536 / JCM 13569 / NCTC 13031 / TMC 1543 / L948) (Mycobacterium abscessus).